The chain runs to 110 residues: Large ribosomal subunit protein eL30 (110 aa).

It belongs to the eukaryotic ribosomal protein eL30 family.

The sequence is that of Large ribosomal subunit protein eL30 (rpl30e) from Methanocaldococcus jannaschii (strain ATCC 43067 / DSM 2661 / JAL-1 / JCM 10045 / NBRC 100440) (Methanococcus jannaschii).